The sequence spans 535 residues: CTP synthase (535 aa).

The tract at residues 1–268 (MSTKYIFVTG…DQIVCDHLKL (268 aa)) is amidoligase domain. Ser14 provides a ligand contact to CTP. A UTP-binding site is contributed by Ser14. 15–20 (SIGKGI) serves as a coordination point for ATP. Residue Tyr55 participates in L-glutamine binding. Residue Asp72 coordinates ATP. Positions 72 and 142 each coordinate Mg(2+). Residues 149 to 151 (DIE), 189 to 194 (KTKPTQ), and Lys225 contribute to the CTP site. Residues 189 to 194 (KTKPTQ) and Lys225 each bind UTP. Positions 293–535 (KISLVGKYVE…FVTAAVENSN (243 aa)) constitute a Glutamine amidotransferase type-1 domain. An L-glutamine-binding site is contributed by Gly355. Residue Cys382 is the Nucleophile; for glutamine hydrolysis of the active site. Residues 383–386 (LGMQ), Glu406, and Arg464 contribute to the L-glutamine site. Residues His509 and Glu511 contribute to the active site.

The protein belongs to the CTP synthase family. As to quaternary structure, homotetramer.

It carries out the reaction UTP + L-glutamine + ATP + H2O = CTP + L-glutamate + ADP + phosphate + 2 H(+). It catalyses the reaction L-glutamine + H2O = L-glutamate + NH4(+). The catalysed reaction is UTP + NH4(+) + ATP = CTP + ADP + phosphate + 2 H(+). It participates in pyrimidine metabolism; CTP biosynthesis via de novo pathway; CTP from UDP: step 2/2. With respect to regulation, allosterically activated by GTP, when glutamine is the substrate; GTP has no effect on the reaction when ammonia is the substrate. The allosteric effector GTP functions by stabilizing the protein conformation that binds the tetrahedral intermediate(s) formed during glutamine hydrolysis. Inhibited by the product CTP, via allosteric rather than competitive inhibition. Functionally, catalyzes the ATP-dependent amination of UTP to CTP with either L-glutamine or ammonia as the source of nitrogen. Regulates intracellular CTP levels through interactions with the four ribonucleotide triphosphates. This chain is CTP synthase, found in Streptococcus pneumoniae (strain ATCC BAA-255 / R6).